Consider the following 392-residue polypeptide: Sulfate adenylyltransferase (392 aa).

This sequence belongs to the sulfate adenylyltransferase family.

The enzyme catalyses sulfate + ATP + H(+) = adenosine 5'-phosphosulfate + diphosphate. It functions in the pathway sulfur metabolism; hydrogen sulfide biosynthesis; sulfite from sulfate: step 1/3. The chain is Sulfate adenylyltransferase from Trichormus variabilis (strain ATCC 29413 / PCC 7937) (Anabaena variabilis).